Reading from the N-terminus, the 313-residue chain is Glutathione S-transferase omega-like 2 (313 aa).

C49 functions as the Nucleophile in the catalytic mechanism. The GST C-terminal domain maps to 161–289 (PSSLRTKIDE…TDFKHIKCHY (129 aa)).

Belongs to the GST superfamily. Omega family.

Its subcellular location is the cytoplasm. The protein resides in the nucleus. It is found in the golgi apparatus. The catalysed reaction is RX + glutathione = an S-substituted glutathione + a halide anion + H(+). The enzyme catalyses L-dehydroascorbate + 2 glutathione = glutathione disulfide + L-ascorbate. Its function is as follows. Active as '1-Cys' thiol transferase against beta-hydroxyethyl disulfide (HED), as dehydroascorbate reductase and as dimethylarsinic acid reductase, while not active against the standard GST substrate 1-chloro-2,4-dinitrobenzene (CDNB). May be involved in cell wall organization and biogenesis. In Schizosaccharomyces pombe (strain 972 / ATCC 24843) (Fission yeast), this protein is Glutathione S-transferase omega-like 2 (gto2).